The primary structure comprises 201 residues: Probable nicotinate-nucleotide adenylyltransferase (201 aa).

Belongs to the NadD family.

The enzyme catalyses nicotinate beta-D-ribonucleotide + ATP + H(+) = deamido-NAD(+) + diphosphate. The protein operates within cofactor biosynthesis; NAD(+) biosynthesis; deamido-NAD(+) from nicotinate D-ribonucleotide: step 1/1. Its function is as follows. Catalyzes the reversible adenylation of nicotinate mononucleotide (NaMN) to nicotinic acid adenine dinucleotide (NaAD). This is Probable nicotinate-nucleotide adenylyltransferase from Clostridium botulinum (strain Okra / Type B1).